The primary structure comprises 367 residues: Fructose-1,6-bisphosphatase class 1 3 (367 aa).

This sequence belongs to the FBPase class 1 family. In terms of assembly, homotetramer.

The protein localises to the cytoplasm. The enzyme catalyses beta-D-fructose 1,6-bisphosphate + H2O = beta-D-fructose 6-phosphate + phosphate. Its pathway is carbohydrate biosynthesis; gluconeogenesis. This chain is Fructose-1,6-bisphosphatase class 1 3, found in Paraburkholderia phymatum (strain DSM 17167 / CIP 108236 / LMG 21445 / STM815) (Burkholderia phymatum).